Here is a 197-residue protein sequence, read N- to C-terminus: uncharacterized protein (197 aa).

Helical transmembrane passes span alanine 11–isoleucine 31, isoleucine 50–glycine 70, alanine 79–alanine 99, alanine 108–methionine 128, alanine 136–leucine 156, and threonine 158–phenylalanine 178.

Belongs to the chromate ion transporter (CHR) (TC 2.A.51) family.

It localises to the cell membrane. This is an uncharacterized protein from Bacillus subtilis (strain 168).